A 367-amino-acid polypeptide reads, in one-letter code: Mating-type protein ALPHA2 (367 aa).

The segment at residues Gly273–Arg338 is a DNA-binding region (homeobox; TALE-type).

The protein belongs to the TALE/M-ATYP homeobox family. Forms a heterodimer with A1.

Its subcellular location is the nucleus. In terms of biological role, mating type proteins are sequence specific DNA-binding proteins that act as master switches in yeast differentiation by controlling gene expression in a cell type-specific fashion. Transcriptional corepressor that acts in conjunction with A1 to repress transcription of haploid-specific genes. This is Mating-type protein ALPHA2 (MATB2) from Yarrowia lipolytica (strain CLIB 122 / E 150) (Yeast).